A 148-amino-acid chain; its full sequence is MNLLLLNGPNLNLLGKREPSIYGSQSLESIEISLSQRAKEEGVGLECFQSNSEGTLVDYIHQSIGKVDAILINAGAYTHTSIALRDALLSAEIPYVELHLSNTYARETFRQKSLLADRAIGVVSGFGVMSYQLAFQGILDYLRNRSKE.

Y22 (proton acceptor) is an active-site residue. Substrate-binding residues include N73, H79, and D86. H99 serves as the catalytic Proton donor. Substrate contacts are provided by residues 100-101 and R110; that span reads LS.

This sequence belongs to the type-II 3-dehydroquinase family. In terms of assembly, homododecamer.

It catalyses the reaction 3-dehydroquinate = 3-dehydroshikimate + H2O. The protein operates within metabolic intermediate biosynthesis; chorismate biosynthesis; chorismate from D-erythrose 4-phosphate and phosphoenolpyruvate: step 3/7. Its function is as follows. Catalyzes a trans-dehydration via an enolate intermediate. This chain is 3-dehydroquinate dehydratase, found in Prochlorococcus marinus (strain MIT 9211).